We begin with the raw amino-acid sequence, 318 residues long: Porphobilinogen deaminase (318 aa).

Position 241 is an S-(dipyrrolylmethanemethyl)cysteine (Cys-241).

Belongs to the HMBS family. As to quaternary structure, monomer. The cofactor is dipyrromethane.

The catalysed reaction is 4 porphobilinogen + H2O = hydroxymethylbilane + 4 NH4(+). It participates in porphyrin-containing compound metabolism; protoporphyrin-IX biosynthesis; coproporphyrinogen-III from 5-aminolevulinate: step 2/4. Functionally, tetrapolymerization of the monopyrrole PBG into the hydroxymethylbilane pre-uroporphyrinogen in several discrete steps. This Geotalea daltonii (strain DSM 22248 / JCM 15807 / FRC-32) (Geobacter daltonii) protein is Porphobilinogen deaminase.